Here is a 228-residue protein sequence, read N- to C-terminus: L-ornithine N5-acetyltransferase NATA1 (228 aa).

The segment at 1–21 (MAPPTAAPEPNTVPETSPTGH) is disordered. Residues 77-227 (VFLLEISPSP…DALQAIDKLN (151 aa)) form the N-acetyltransferase domain. Acetyl-CoA is bound by residues 153–155 (IFM), 161–166 (RKGFGK), 192–195 (NVNA), and Tyr-199.

Belongs to the acetyltransferase family.

In terms of biological role, acetyltransferase that converts ornithine to N5-acetylornithine, which is likely used in plant defense. This Arabidopsis thaliana (Mouse-ear cress) protein is L-ornithine N5-acetyltransferase NATA1 (NATA1).